The sequence spans 151 residues: Small ribosomal subunit protein uS15 (151 aa).

It belongs to the universal ribosomal protein uS15 family. In terms of assembly, component of the small ribosomal subunit.

The protein localises to the cytoplasm. Its function is as follows. Component of the small ribosomal subunit. The ribosome is a large ribonucleoprotein complex responsible for the synthesis of proteins in the cell. This Gillichthys mirabilis (Long-jawed mudsucker) protein is Small ribosomal subunit protein uS15 (rps13).